The chain runs to 338 residues: tRNA-specific 2-thiouridylase MnmA (338 aa).

ATP is bound by residues 6–13 (AMSGGVDS) and Met-32. The active-site Nucleophile is the Cys-92. Cys-92 and Cys-186 are joined by a disulfide. Gly-116 contacts ATP. The tract at residues 134–136 (KDQ) is interaction with tRNA. The active-site Cysteine persulfide intermediate is Cys-186. The tract at residues 288–289 (RY) is interaction with tRNA.

This sequence belongs to the MnmA/TRMU family.

It localises to the cytoplasm. The catalysed reaction is S-sulfanyl-L-cysteinyl-[protein] + uridine(34) in tRNA + AH2 + ATP = 2-thiouridine(34) in tRNA + L-cysteinyl-[protein] + A + AMP + diphosphate + H(+). In terms of biological role, catalyzes the 2-thiolation of uridine at the wobble position (U34) of tRNA, leading to the formation of s(2)U34. The polypeptide is tRNA-specific 2-thiouridylase MnmA (Campylobacter lari (strain RM2100 / D67 / ATCC BAA-1060)).